The following is a 236-amino-acid chain: 1-(5-phosphoribosyl)-5-[(5-phosphoribosylamino)methylideneamino] imidazole-4-carboxamide isomerase (236 aa).

D8 acts as the Proton acceptor in catalysis. The active-site Proton donor is D128.

Belongs to the HisA/HisF family.

The protein localises to the cytoplasm. It carries out the reaction 1-(5-phospho-beta-D-ribosyl)-5-[(5-phospho-beta-D-ribosylamino)methylideneamino]imidazole-4-carboxamide = 5-[(5-phospho-1-deoxy-D-ribulos-1-ylimino)methylamino]-1-(5-phospho-beta-D-ribosyl)imidazole-4-carboxamide. The protein operates within amino-acid biosynthesis; L-histidine biosynthesis; L-histidine from 5-phospho-alpha-D-ribose 1-diphosphate: step 4/9. The chain is 1-(5-phosphoribosyl)-5-[(5-phosphoribosylamino)methylideneamino] imidazole-4-carboxamide isomerase from Nitrosopumilus maritimus (strain SCM1).